A 314-amino-acid polypeptide reads, in one-letter code: Hydroxyethylthiazole kinase (314 aa).

Positions 1–13 (MSNSASSFADVSS) are enriched in low complexity. A disordered region spans residues 1–24 (MSNSASSFADVSSGCTAGTPVPAD). M70 is a substrate binding site. R145 and S217 together coordinate ATP. G244 provides a ligand contact to substrate.

This sequence belongs to the Thz kinase family. Mg(2+) is required as a cofactor.

It carries out the reaction 5-(2-hydroxyethyl)-4-methylthiazole + ATP = 4-methyl-5-(2-phosphooxyethyl)-thiazole + ADP + H(+). Its pathway is cofactor biosynthesis; thiamine diphosphate biosynthesis; 4-methyl-5-(2-phosphoethyl)-thiazole from 5-(2-hydroxyethyl)-4-methylthiazole: step 1/1. In terms of biological role, catalyzes the phosphorylation of the hydroxyl group of 4-methyl-5-beta-hydroxyethylthiazole (THZ). The chain is Hydroxyethylthiazole kinase from Bifidobacterium longum subsp. infantis (strain ATCC 15697 / DSM 20088 / JCM 1222 / NCTC 11817 / S12).